The primary structure comprises 126 residues: RutC family protein PH0854 (126 aa).

It belongs to the RutC family.

The protein is RutC family protein PH0854 of Pyrococcus horikoshii (strain ATCC 700860 / DSM 12428 / JCM 9974 / NBRC 100139 / OT-3).